Reading from the N-terminus, the 285-residue chain is E2F-associated phosphoprotein (285 aa).

Position 1 is an N-acetylmethionine (Met1). The disordered stretch occupies residues Met1–Val30. Positions Glu15–Val30 are enriched in acidic residues. A Phosphoserine modification is found at Ser17. Thr37 is subject to Phosphothreonine. The interval Cys48–Thr96 is disordered. The segment covering Ser55 to Ala67 has biased composition (acidic residues). Over residues Ser81–Gly92 the composition is skewed to low complexity. A phosphoserine mark is found at Ser109 and Ser111. The interval Val118–Asp144 is disordered. Residues Thr121 to Lys130 show a composition bias toward basic residues.

As to quaternary structure, interacts with E2F1. The C-terminal half binds the N-terminal of E2F1. Also interacts with E2F2 and E2F3, but not E2F4. In terms of tissue distribution, ubiquitously expressed. Highest levels in heart, placenta, skeletal muscle and pancreas. Lower levels in brain, lung and kidney. In the brain, expressed in all regions with high levels in the cerebellum and cerebral cortex. Expressed in COS1 and transformed skin fibroblasts.

It is found in the cytoplasm. Its subcellular location is the nucleus. Its function is as follows. May play an important role in the fine-tuning of both major E2F1 activities, the regulation of the cell-cycle and the induction of apoptosis. Promotes S-phase entry, and inhibits p14(ARP) expression. This Homo sapiens (Human) protein is E2F-associated phosphoprotein (EAPP).